The following is a 136-amino-acid chain: Heavy metal-associated isoprenylated plant protein 19 (136 aa).

Positions Y13–K77 constitute an HMA domain. Residues C24 and C27 each contribute to the a metal cation site. C133 is subject to Cysteine methyl ester. C133 carries the S-farnesyl cysteine lipid modification. Residues S134 to S136 constitute a propeptide, removed in mature form.

This sequence belongs to the HIPP family.

Its function is as follows. Heavy-metal-binding protein. The chain is Heavy metal-associated isoprenylated plant protein 19 from Arabidopsis thaliana (Mouse-ear cress).